Consider the following 565-residue polypeptide: Wee1-like protein kinase 2 (565 aa).

2 stretches are compositionally biased toward basic and acidic residues: residues 1-12 (MGDNGDNKELKQ) and 26-52 (EGQK…DSEA). Disordered stretches follow at residues 1-142 (MGDN…TPGP) and 169-189 (KSNG…EEGK). Ser-77 carries the phosphoserine modification. Positions 173–175 (KRK) match the Nuclear localization signal motif. Residues 178-189 (RDLEEAGPEEGK) show a composition bias toward basic and acidic residues. Positions 214-492 (FLEVEKIGVG…TRSRVLCPSL (279 aa)) constitute a Protein kinase domain. Residues 220–228 (IGVGEFGTV) and Lys-243 each bind ATP. The Nuclear export signal signature appears at 317-331 (KLKDILLQISLGLKY). The active-site Proton acceptor is Asp-341. 2 residues coordinate Mg(2+): Asn-346 and Asp-382. Residues 495–521 (TEELQQQLNLEKFKTATLERELKEVQR) adopt a coiled-coil conformation. The segment at 518-565 (EVQRAQSSKEGQSSPGVTGTHTGSRSTRRLVGGKSAKSSSFTWGQSSP) is disordered. Composition is skewed to polar residues over residues 521–534 (RAQS…SPGV) and 553–565 (AKSS…QSSP).

It belongs to the protein kinase superfamily. Ser/Thr protein kinase family. WEE1 subfamily. In terms of processing, phosphorylation leads to increase its activity. In terms of tissue distribution, ovary-specific.

The protein localises to the nucleus. It catalyses the reaction L-tyrosyl-[protein] + ATP = O-phospho-L-tyrosyl-[protein] + ADP + H(+). In terms of biological role, oocyte-specific protein tyrosine kinase that phosphorylates and inhibits CDK1 and acts as a key regulator of meiosis during both prophase I and metaphase II. Required to maintain meiotic arrest in oocytes during the germinal vesicle (GV) stage, a long period of quiescence at dictyate prophase I, by phosphorylating CDK1 at 'Tyr-15', leading to inhibit CDK1 activity and prevent meiotic reentry. Also required for metaphase II exit during egg activation by phosphorylating CDK1 at 'Tyr-15', to ensure exit from meiosis in oocytes and promote pronuclear formation. The sequence is that of Wee1-like protein kinase 2 (WEE2) from Sus scrofa (Pig).